Reading from the N-terminus, the 203-residue chain is ATP-dependent Clp protease proteolytic subunit 1 (203 aa).

The active-site Nucleophile is Ser-101. His-126 is a catalytic residue.

It belongs to the peptidase S14 family. Fourteen ClpP subunits assemble into 2 heptameric rings which stack back to back to give a disk-like structure with a central cavity, resembling the structure of eukaryotic proteasomes.

It is found in the cytoplasm. The enzyme catalyses Hydrolysis of proteins to small peptides in the presence of ATP and magnesium. alpha-casein is the usual test substrate. In the absence of ATP, only oligopeptides shorter than five residues are hydrolyzed (such as succinyl-Leu-Tyr-|-NHMec, and Leu-Tyr-Leu-|-Tyr-Trp, in which cleavage of the -Tyr-|-Leu- and -Tyr-|-Trp bonds also occurs).. In terms of biological role, cleaves peptides in various proteins in a process that requires ATP hydrolysis. Has a chymotrypsin-like activity. Plays a major role in the degradation of misfolded proteins. The chain is ATP-dependent Clp protease proteolytic subunit 1 from Synechococcus sp. (strain JA-2-3B'a(2-13)) (Cyanobacteria bacterium Yellowstone B-Prime).